The sequence spans 254 residues: Guanylate kinase (254 aa).

The Guanylate kinase-like domain occupies 64-243 (KHLVVLAGPT…AAREVVDLMM (180 aa)). 71-78 (GPTAVGKG) is an ATP binding site.

It belongs to the guanylate kinase family.

It localises to the cytoplasm. The enzyme catalyses GMP + ATP = GDP + ADP. Functionally, essential for recycling GMP and indirectly, cGMP. This Leifsonia xyli subsp. xyli (strain CTCB07) protein is Guanylate kinase.